The primary structure comprises 419 residues: S-adenosylmethionine synthase (419 aa).

ATP is bound at residue H14. A Mg(2+)-binding site is contributed by D16. A K(+)-binding site is contributed by E42. Residues E55 and Q98 each coordinate L-methionine. Positions 98–108 are flexible loop; sequence QSQDIYQGVDR. ATP contacts are provided by residues 164-166, 242-243, D251, 257-258, A274, and K278; these read DSK, KF, and RK. L-methionine is bound at residue D251. K282 is an L-methionine binding site.

Belongs to the AdoMet synthase family. In terms of assembly, homotetramer; dimer of dimers. Mg(2+) serves as cofactor. Requires K(+) as cofactor.

The protein localises to the cytoplasm. The enzyme catalyses L-methionine + ATP + H2O = S-adenosyl-L-methionine + phosphate + diphosphate. It participates in amino-acid biosynthesis; S-adenosyl-L-methionine biosynthesis; S-adenosyl-L-methionine from L-methionine: step 1/1. Functionally, catalyzes the formation of S-adenosylmethionine (AdoMet) from methionine and ATP. The overall synthetic reaction is composed of two sequential steps, AdoMet formation and the subsequent tripolyphosphate hydrolysis which occurs prior to release of AdoMet from the enzyme. This Christiangramia forsetii (strain DSM 17595 / CGMCC 1.15422 / KT0803) (Gramella forsetii) protein is S-adenosylmethionine synthase.